The chain runs to 372 residues: GDP-mannose 4,6 dehydratase (372 aa).

Residues 1–22 (MAHAPASCPSSRNSGDGDKGKP) form a disordered region. Residue Ala-2 is modified to N-acetylalanine. NADP(+) is bound by residues 30–35 (GITGQD), 55–58 (RRSS), 86–87 (DL), 108–112 (LGAQS), and Tyr-123. The active site involves Thr-155. Active-site nucleophile residues include Glu-157 and Tyr-179. 3 residues coordinate NADP(+): Lys-183, His-209, and Arg-214. Phosphotyrosine is present on Tyr-323.

It belongs to the NAD(P)-dependent epimerase/dehydratase family. GDP-mannose 4,6-dehydratase subfamily. NADP(+) serves as cofactor.

It carries out the reaction GDP-alpha-D-mannose = GDP-4-dehydro-alpha-D-rhamnose + H2O. It participates in nucleotide-sugar biosynthesis; GDP-L-fucose biosynthesis via de novo pathway; GDP-L-fucose from GDP-alpha-D-mannose: step 1/2. Its activity is regulated as follows. Inhibited by GDP-fucose. Catalyzes the conversion of GDP-D-mannose to GDP-4-dehydro-6-deoxy-D-mannose. The protein is GDP-mannose 4,6 dehydratase (GMDS) of Cricetulus griseus (Chinese hamster).